Consider the following 302-residue polypeptide: Urease accessory protein UreG (302 aa).

3 stretches are compositionally biased toward basic and acidic residues: residues 1-32 (MHDP…DHVH), 40-56 (HEHE…EHGH), and 64-76 (HAHE…THEH). The disordered stretch occupies residues 1-76 (MHDPGEHGHG…EHAHGHTHEH (76 aa)). GTP is bound at residue 105–112 (GPVGSGKT).

It belongs to the SIMIBI class G3E GTPase family. UreG subfamily. In terms of assembly, homodimer. UreD, UreF and UreG form a complex that acts as a GTP-hydrolysis-dependent molecular chaperone, activating the urease apoprotein by helping to assemble the nickel containing metallocenter of UreC. The UreE protein probably delivers the nickel.

The protein resides in the cytoplasm. Functionally, facilitates the functional incorporation of the urease nickel metallocenter. This process requires GTP hydrolysis, probably effectuated by UreG. In Sorangium cellulosum (strain So ce56) (Polyangium cellulosum (strain So ce56)), this protein is Urease accessory protein UreG.